A 385-amino-acid chain; its full sequence is Glucans biosynthesis protein C (385 aa).

10 helical membrane-spanning segments follow: residues 17–37 (AWLM…SHTW), 60–80 (MQVF…RYPL), 91–111 (VGIP…IMLQ), 137–157 (ISHL…VWIF), 173–193 (KFSM…YAVI), 212–232 (FIVM…LAFI), 239–259 (LFTT…VAYL), 274–294 (TESV…FSFG), 311–331 (ASLF…AYIT), and 338–358 (WLGF…LYEI).

The protein belongs to the acyltransferase 3 family. OpgC subfamily.

Its subcellular location is the cell membrane. It participates in glycan metabolism; osmoregulated periplasmic glucan (OPG) biosynthesis. Necessary for the succinyl substitution of periplasmic glucans. Could catalyze the transfer of succinyl residues from the cytoplasmic side of the membrane to the nascent glucan backbones on the periplasmic side of the membrane. In Escherichia coli O6:K15:H31 (strain 536 / UPEC), this protein is Glucans biosynthesis protein C.